Consider the following 301-residue polypeptide: LHMIHLHWYQYPPMNPMMYPLLLIFMFITGIPCLAGNFVTIWVFMTTKSLRSPANLLVVNLAMSDFLMMFTMFPPMMITCYYHTWTLGPTFCQVYAFLGNLFGCTSIWTMVFITFDRYNVIVKGVAGEPLSNKKAALWILSAWVLSFSWCSAPFFGWNRYVPEGNLTGCGTDYLSEDALSRSYLYVYSVWVYFLPLLITIYCYVFIIKAVAAHEKGMRDQAKKMGIKSLRNEEAQKTSAECRLAKIAMTTVALWFIAWTPYLLINWVGMFARSYLSPVYTIWGYVFAKANAVYNPIVYAIS.

Residues 1–18 are Extracellular-facing; sequence LHMIHLHWYQYPPMNPMM. The chain crosses the membrane as a helical span at residues 19–43; it reads YPLLLIFMFITGIPCLAGNFVTIWV. Residues 44-55 lie on the Cytoplasmic side of the membrane; sequence FMTTKSLRSPAN. The helical transmembrane segment at 56–78 threads the bilayer; the sequence is LLVVNLAMSDFLMMFTMFPPMMI. Topologically, residues 79–92 are extracellular; it reads TCYYHTWTLGPTFC. Residues Cys-92 and Cys-169 are joined by a disulfide bond. A helical membrane pass occupies residues 93–115; sequence QVYAFLGNLFGCTSIWTMVFITF. The short motif at 116-118 is the 'Ionic lock' involved in activated form stabilization element; the sequence is DRY. The Cytoplasmic portion of the chain corresponds to 116 to 134; sequence DRYNVIVKGVAGEPLSNKK. The helical transmembrane segment at 135–155 threads the bilayer; it reads AALWILSAWVLSFSWCSAPFF. The Extracellular portion of the chain corresponds to 156-182; the sequence is GWNRYVPEGNLTGCGTDYLSEDALSRS. Asn-165 is a glycosylation site (N-linked (GlcNAc...) asparagine). Residues 183-204 traverse the membrane as a helical segment; that stretch reads YLYVYSVWVYFLPLLITIYCYV. Topologically, residues 205-245 are cytoplasmic; it reads FIIKAVAAHEKGMRDQAKKMGIKSLRNEEAQKTSAECRLAK. Residues 246–267 form a helical membrane-spanning segment; sequence IAMTTVALWFIAWTPYLLINWV. Residues 268-278 lie on the Extracellular side of the membrane; that stretch reads GMFARSYLSPV. The helical transmembrane segment at 279 to 300 threads the bilayer; that stretch reads YTIWGYVFAKANAVYNPIVYAI. Lys-288 is modified (N6-(retinylidene)lysine).

It belongs to the G-protein coupled receptor 1 family. Opsin subfamily. Homodimer. Interacts with GNAQ. Post-translationally, contains one covalently linked retinal chromophore.

It is found in the cell projection. The protein resides in the rhabdomere membrane. In terms of biological role, photoreceptor required for image-forming vision at low light intensity. Can use both retinal and 3-dehydroretinal as visual pigment. Light-induced isomerization of 11-cis to all-trans retinal triggers a conformational change that activates signaling via G-proteins. Signaling via GNAQ probably mediates the activation of phospholipase C. This chain is Rhodopsin (RHO), found in Cambarellus shufeldtii (Cajun dwarf crayfish).